Here is a 143-residue protein sequence, read N- to C-terminus: FAD synthase (143 aa).

ATP-binding positions include 11 to 12 (TF), 16 to 19 (HPGH), and aspartate 94.

Belongs to the archaeal FAD synthase family. In terms of assembly, homodimer. Requires a divalent metal cation as cofactor.

It carries out the reaction FMN + ATP + H(+) = FAD + diphosphate. The protein operates within cofactor biosynthesis; FAD biosynthesis; FAD from FMN: step 1/1. In terms of biological role, catalyzes the transfer of the AMP portion of ATP to flavin mononucleotide (FMN) to produce flavin adenine dinucleotide (FAD) coenzyme. This chain is FAD synthase, found in Halomicrobium mukohataei (strain ATCC 700874 / DSM 12286 / JCM 9738 / NCIMB 13541) (Haloarcula mukohataei).